The chain runs to 186 residues: LIM domain-containing protein DDB_G0271356 (186 aa).

3 consecutive LIM zinc-binding domains span residues 7–67 (PECY…DKFA), 68–127 (PKCQ…KIGF), and 128–186 (LCRH…KLYG).

In Dictyostelium discoideum (Social amoeba), this protein is LIM domain-containing protein DDB_G0271356.